The following is a 321-amino-acid chain: Peroxidase 28 (321 aa).

The N-terminal stretch at 1-21 (MKIATFSVLLLLLFIFPVALA) is a signal peptide. 4 disulfide bridges follow: Cys-32-Cys-111, Cys-65-Cys-70, Cys-117-Cys-317, and Cys-196-Cys-228. His-63 serves as the catalytic Proton acceptor. 5 residues coordinate Ca(2+): Asp-64, Val-67, Gly-69, Asp-71, and Ser-73. Pro-159 contacts substrate. Position 189 (His-189) interacts with heme b. Position 190 (Thr-190) interacts with Ca(2+). Ca(2+)-binding residues include Asp-238, Thr-244, and Asp-249.

It belongs to the peroxidase family. Classical plant (class III) peroxidase subfamily. Heme b is required as a cofactor. Ca(2+) serves as cofactor.

The protein localises to the secreted. The enzyme catalyses 2 a phenolic donor + H2O2 = 2 a phenolic radical donor + 2 H2O. Its function is as follows. Removal of H(2)O(2), oxidation of toxic reductants, biosynthesis and degradation of lignin, suberization, auxin catabolism, response to environmental stresses such as wounding, pathogen attack and oxidative stress. These functions might be dependent on each isozyme/isoform in each plant tissue. The sequence is that of Peroxidase 28 (PER28) from Arabidopsis thaliana (Mouse-ear cress).